The sequence spans 153 residues: Bkd operon transcriptional regulator (153 aa).

Residues 4 to 65 (LDRIDLKILR…RLDEERLSGA (62 aa)) form the HTH asnC-type domain. Positions 23–42 (WRDLAQKVGLSLTPTLRRVR) form a DNA-binding region, H-T-H motif.

Its function is as follows. Positive regulator of the bkd operon for branched-chain keto acid dehydrogenase complex. The sequence is that of Bkd operon transcriptional regulator (bkdR) from Pseudomonas aeruginosa (strain ATCC 15692 / DSM 22644 / CIP 104116 / JCM 14847 / LMG 12228 / 1C / PRS 101 / PAO1).